The chain runs to 311 residues: Salutaridine reductase (311 aa).

Position 17-40 (17-40) interacts with NADP(+); it reads VTGGNKGIGFEICKQLSSSGIMVV. S180 contributes to the substrate binding site. Catalysis depends on Y236, which acts as the Proton acceptor.

Belongs to the short-chain dehydrogenases/reductases (SDR) family.

The enzyme catalyses (7S)-salutaridinol + NADP(+) = salutaridine + NADPH + H(+). With respect to regulation, subject to substrate inhibition at salutaridine concentrations higher than 20 to 30 uM. In terms of biological role, involved in biosynthesis of morphinan-type benzylisoquinoline alkaloids. Catalyzes the stereospecific conversion of salutaridine to salutaridinol. The polypeptide is Salutaridine reductase (Papaver bracteatum (Great scarlet poppy)).